A 55-amino-acid chain; its full sequence is MPQLSPMNGLLIMFSVTLMLLIVLVINHFMLTPMASPLLASHLKTKKSGGEKLYY.

A helical transmembrane segment spans residues 11–31 (LIMFSVTLMLLIVLVINHFML).

Belongs to the ATPase protein 8 family. F-type ATPases have 2 components, CF(1) - the catalytic core - and CF(0) - the membrane proton channel.

The protein resides in the mitochondrion membrane. Mitochondrial membrane ATP synthase (F(1)F(0) ATP synthase or Complex V) produces ATP from ADP in the presence of a proton gradient across the membrane which is generated by electron transport complexes of the respiratory chain. F-type ATPases consist of two structural domains, F(1) - containing the extramembraneous catalytic core and F(0) - containing the membrane proton channel, linked together by a central stalk and a peripheral stalk. During catalysis, ATP synthesis in the catalytic domain of F(1) is coupled via a rotary mechanism of the central stalk subunits to proton translocation. Part of the complex F(0) domain. Minor subunit located with subunit a in the membrane. This chain is ATP synthase protein 8 (MT-ATP8), found in Albinaria caerulea (Land snail).